A 449-amino-acid polypeptide reads, in one-letter code: uncharacterized protein (449 aa).

It is found in the mitochondrion. This is an uncharacterized protein from Podospora anserina (strain S / ATCC MYA-4624 / DSM 980 / FGSC 10383) (Pleurage anserina).